The following is a 287-amino-acid chain: 4-hydroxybenzoate octaprenyltransferase (287 aa).

The next 6 membrane-spanning stretches (helical) occupy residues 23–40 (IGSL…WLAG), 98–118 (ILFV…NKMT), 141–161 (LPQF…YAAV), 163–183 (ESLP…TVAY), 213–233 (IIIG…GNIT), and 235–255 (LGIP…YQQI).

This sequence belongs to the UbiA prenyltransferase family. It depends on Mg(2+) as a cofactor.

The protein resides in the cell inner membrane. It carries out the reaction all-trans-octaprenyl diphosphate + 4-hydroxybenzoate = 4-hydroxy-3-(all-trans-octaprenyl)benzoate + diphosphate. The protein operates within cofactor biosynthesis; ubiquinone biosynthesis. Catalyzes the prenylation of para-hydroxybenzoate (PHB) with an all-trans polyprenyl group. Mediates the second step in the final reaction sequence of ubiquinone-8 (UQ-8) biosynthesis, which is the condensation of the polyisoprenoid side chain with PHB, generating the first membrane-bound Q intermediate 3-octaprenyl-4-hydroxybenzoate. The protein is 4-hydroxybenzoate octaprenyltransferase of Pectobacterium atrosepticum (strain SCRI 1043 / ATCC BAA-672) (Erwinia carotovora subsp. atroseptica).